The primary structure comprises 1124 residues: ATP-dependent DNA helicase mph1 (1124 aa).

2 disordered regions span residues 1-103 (MFTL…EARS) and 123-302 (QLTQ…PTQH). 2 stretches are compositionally biased toward acidic residues: residues 7 to 17 (DSSDYFDDDLG) and 169 to 178 (RDDEYDDDEE). The span at 210 to 222 (TPIIGQQSTTIEA) shows a compositional bias: polar residues. The span at 226-236 (LLDDIPDDAFD) shows a compositional bias: acidic residues. Positions 255–271 (SFTQSTNRPLGVRQTTL) are enriched in polar residues. One can recognise a Helicase ATP-binding domain in the interval 328–496 (IAQKGLFHNL…AVIDGLDISR (169 aa)). 341-348 (LPTGLGKT) is a binding site for ATP. Residues 444 to 447 (DEAH) carry the DEAH box motif. Residues 666–840 (YLKQVVLNHF…GTRFTFHDDM (175 aa)) form the Helicase C-terminal domain. The segment covering 855–873 (KRAIDIPEENTVRDLPEPK) has biased composition (basic and acidic residues). Disordered stretches follow at residues 855–923 (KRAI…TPEP) and 1016–1124 (MPKA…DSDD). 2 stretches are compositionally biased toward basic residues: residues 874–886 (RRGR…PKKF) and 906–916 (SKRRVPNKSKA).

This sequence belongs to the DEAD box helicase family. DEAH subfamily. FANCM sub-subfamily. In terms of assembly, interacts with the MHF histone-fold complex to form the FANCM-MHF complex.

The protein localises to the nucleus. The enzyme catalyses ATP + H2O = ADP + phosphate + H(+). ATP-dependent DNA helicase involved in DNA damage repair by homologous recombination and in genome maintenance. Capable of unwinding D-loops. Plays a role in limiting crossover recombinants during mitotic DNA double-strand break (DSB) repair. Component of a FANCM-MHF complex which promotes gene conversion at blocked replication forks, probably by reversal of the stalled fork. In Aspergillus niger (strain ATCC MYA-4892 / CBS 513.88 / FGSC A1513), this protein is ATP-dependent DNA helicase mph1.